We begin with the raw amino-acid sequence, 785 residues long: Endonuclease MutS2 (785 aa).

Residue glycine 334–threonine 341 participates in ATP binding. The Smr domain occupies leucine 710 to lysine 785.

The protein belongs to the DNA mismatch repair MutS family. MutS2 subfamily. Homodimer. Binds to stalled ribosomes, contacting rRNA.

Endonuclease that is involved in the suppression of homologous recombination and thus may have a key role in the control of bacterial genetic diversity. Functionally, acts as a ribosome collision sensor, splitting the ribosome into its 2 subunits. Detects stalled/collided 70S ribosomes which it binds and splits by an ATP-hydrolysis driven conformational change. Acts upstream of the ribosome quality control system (RQC), a ribosome-associated complex that mediates the extraction of incompletely synthesized nascent chains from stalled ribosomes and their subsequent degradation. Probably generates substrates for RQC. The chain is Endonuclease MutS2 from Lactobacillus helveticus (strain DPC 4571).